The primary structure comprises 103 residues: Large ribosomal subunit protein uL23 (103 aa).

It belongs to the universal ribosomal protein uL23 family. In terms of assembly, part of the 50S ribosomal subunit. Contacts protein L29, and trigger factor when it is bound to the ribosome.

In terms of biological role, one of the early assembly proteins it binds 23S rRNA. One of the proteins that surrounds the polypeptide exit tunnel on the outside of the ribosome. Forms the main docking site for trigger factor binding to the ribosome. The protein is Large ribosomal subunit protein uL23 of Chlorobium luteolum (strain DSM 273 / BCRC 81028 / 2530) (Pelodictyon luteolum).